Here is a 342-residue protein sequence, read N- to C-terminus: D-erythrose-4-phosphate dehydrogenase (342 aa).

12-13 (RI) is a binding site for NAD(+). Substrate contacts are provided by residues 154–156 (SCT), R200, 213–214 (TK), and R236. C155 functions as the Nucleophile in the catalytic mechanism. N318 is an NAD(+) binding site.

This sequence belongs to the glyceraldehyde-3-phosphate dehydrogenase family. Epd subfamily. In terms of assembly, homotetramer.

The protein localises to the cytoplasm. The enzyme catalyses D-erythrose 4-phosphate + NAD(+) + H2O = 4-phospho-D-erythronate + NADH + 2 H(+). The protein operates within cofactor biosynthesis; pyridoxine 5'-phosphate biosynthesis; pyridoxine 5'-phosphate from D-erythrose 4-phosphate: step 1/5. Its function is as follows. Catalyzes the NAD-dependent conversion of D-erythrose 4-phosphate to 4-phosphoerythronate. The sequence is that of D-erythrose-4-phosphate dehydrogenase from Salmonella arizonae (strain ATCC BAA-731 / CDC346-86 / RSK2980).